We begin with the raw amino-acid sequence, 264 residues long: Zinc import ATP-binding protein ZnuC (264 aa).

An ABC transporter domain is found at 11 to 226 (IELKGVNVTF…PVFIRFFGNQ (216 aa)). 43–50 (GPNGGGKS) lines the ATP pocket.

This sequence belongs to the ABC transporter superfamily. Zinc importer (TC 3.A.1.15.5) family. As to quaternary structure, the complex is composed of two ATP-binding proteins (ZnuC), two transmembrane proteins (ZnuB) and a solute-binding protein (ZnuA).

Its subcellular location is the cell inner membrane. The enzyme catalyses Zn(2+)(out) + ATP(in) + H2O(in) = Zn(2+)(in) + ADP(in) + phosphate(in) + H(+)(in). Functionally, part of the ABC transporter complex ZnuABC involved in zinc import. Responsible for energy coupling to the transport system. The protein is Zinc import ATP-binding protein ZnuC of Histophilus somni (strain 129Pt) (Haemophilus somnus).